A 275-amino-acid chain; its full sequence is Light-independent protochlorophyllide reductase iron-sulfur ATP-binding protein (275 aa).

ATP is bound by residues 12 to 17 and K41; that span reads GIGKST. S16 is a binding site for Mg(2+). [4Fe-4S] cluster is bound by residues C97 and C131. 182 to 183 provides a ligand contact to ATP; sequence NR.

Belongs to the NifH/BchL/ChlL family. In terms of assembly, homodimer. Protochlorophyllide reductase is composed of three subunits; BchL, BchN and BchB. The cofactor is [4Fe-4S] cluster.

The catalysed reaction is chlorophyllide a + oxidized 2[4Fe-4S]-[ferredoxin] + 2 ADP + 2 phosphate = protochlorophyllide a + reduced 2[4Fe-4S]-[ferredoxin] + 2 ATP + 2 H2O. Its pathway is porphyrin-containing compound metabolism; bacteriochlorophyll biosynthesis (light-independent). Functionally, component of the dark-operative protochlorophyllide reductase (DPOR) that uses Mg-ATP and reduced ferredoxin to reduce ring D of protochlorophyllide (Pchlide) to form chlorophyllide a (Chlide). This reaction is light-independent. The L component serves as a unique electron donor to the NB-component of the complex, and binds Mg-ATP. The chain is Light-independent protochlorophyllide reductase iron-sulfur ATP-binding protein from Pelodictyon phaeoclathratiforme (strain DSM 5477 / BU-1).